The chain runs to 192 residues: Probable cobalt-precorrin-6B C(15)-methyltransferase (decarboxylating) (192 aa).

S-adenosyl-L-methionine-binding positions include Thr-20, 44–48 (GSGTG), Glu-68, and Ala-96.

Belongs to the methyltransferase superfamily. Archaeal-type CbiT family.

It catalyses the reaction Co-precorrin-6B + S-adenosyl-L-methionine = Co-precorrin-7 + S-adenosyl-L-homocysteine + CO2. It functions in the pathway cofactor biosynthesis; adenosylcobalamin biosynthesis; cob(II)yrinate a,c-diamide from sirohydrochlorin (anaerobic route): step 8/10. In terms of biological role, catalyzes the methylation of C-15 in cobalt-precorrin-6B followed by the decarboxylation of C-12 to form cobalt-precorrin-7. The protein is Probable cobalt-precorrin-6B C(15)-methyltransferase (decarboxylating) of Sulfurisphaera tokodaii (strain DSM 16993 / JCM 10545 / NBRC 100140 / 7) (Sulfolobus tokodaii).